Consider the following 497-residue polypeptide: Nucleoside transporter 1 (497 aa).

Residues 1–26 lie on the Cytoplasmic side of the membrane; sequence MSLKGGTAAPAPMAPPRKWYDMTSAE. Residues 27-47 form a helical membrane-spanning segment; sequence FYVYVVAFMCGISIMMPINAV. The Extracellular segment spans residues 48 to 77; it reads FSAPSYMLEYYLYATKDPFLVPKMTNFWTN. A helical transmembrane segment spans residues 78–98; the sequence is VMTYYNLISMVTSLVVEPLTL. The Cytoplasmic segment spans residues 99-107; that stretch reads LKSFRKIPM. The helical transmembrane segment at 108–128 threads the bilayer; the sequence is LVRLLGGLSVLIIEIIVLMVV. Residues 129–135 are Extracellular-facing; the sequence is PARGTTE. Residues 136 to 156 traverse the membrane as a helical segment; sequence AGAVATMCIAGFIGGLGTSIF. Residues 157–172 are Cytoplasmic-facing; it reads ESTVYGMFGAFPPSFT. The helical transmembrane segment at 173–193 threads the bilayer; it reads SIMMGGVGISGVLTSLIQIIV. Over 194 to 208 the chain is Extracellular; that stretch reads KAALPDTYEGVKKQS. A helical membrane pass occupies residues 209 to 229; sequence YIYYSLDVGIQAATFIALIMM. Residues 230–337 are Cytoplasmic-facing; that stretch reads RFNSFAQLHF…SVFSVLRSVK (108 aa). A compositionally biased stretch (basic and acidic residues) spans 286–299; it reads NAEAHKDDPLAERE. Residues 286–316 are disordered; sequence NAEAHKDDPLAERELSEEESGDSRAVEAAGE. Residues 338-358 traverse the membrane as a helical segment; it reads WMFVACGFNFLITLFLFPGIA. At 359–361 the chain is on the extracellular side; the sequence is TGM. The helical transmembrane segment at 362 to 382 threads the bilayer; it reads FPESKWFATVAVFIFNCCDVL. Residues 383-400 are Cytoplasmic-facing; the sequence is GRFSSAFRITWPRRYNQR. A helical membrane pass occupies residues 401-421; that stretch reads WIIVAASFARVIFVPLLLLHS. Residues 422 to 432 are Extracellular-facing; that stretch reads YHYIPSEAYGY. The chain crosses the membrane as a helical span at residues 433-453; that stretch reads VMQVVFGLSSGYIASMALVLG. Topologically, residues 454–465 are cytoplasmic; the sequence is PQSKGIDNDGKR. A helical membrane pass occupies residues 466 to 486; that stretch reads FVAGTLMGISILVGGTIGTVL. Topologically, residues 487-497 are extracellular; the sequence is SIMTQTIRETY.

Belongs to the SLC29A/ENT transporter (TC 2.A.57) family.

The protein resides in the cell membrane. The enzyme catalyses adenosine(in) = adenosine(out). The catalysed reaction is hypoxanthine(out) = hypoxanthine(in). It catalyses the reaction inosine(in) = inosine(out). It carries out the reaction uridine(out) = uridine(in). The enzyme catalyses cytidine(in) = cytidine(out). In terms of biological role, nucleoside transporter with broad substrate specificity. Transports adenosine with high affinity. Can also transport hypoxanthine, inosine, uridine and cytidine. This Crithidia fasciculata protein is Nucleoside transporter 1.